Reading from the N-terminus, the 95-residue chain is Large ribosomal subunit protein uL23 (95 aa).

The protein belongs to the universal ribosomal protein uL23 family. In terms of assembly, part of the 50S ribosomal subunit. Contacts protein L29 and trigger factor when it is bound to the ribosome.

Functionally, one of the early assembly protein it binds 23S rRNA. One of the proteins that surrounds the polypeptide exit tunnel on the outside of the subunit. Forms the main docking site for trigger factor binding to the ribosome. The protein is Large ribosomal subunit protein uL23 of Deinococcus radiodurans (strain ATCC 13939 / DSM 20539 / JCM 16871 / CCUG 27074 / LMG 4051 / NBRC 15346 / NCIMB 9279 / VKM B-1422 / R1).